We begin with the raw amino-acid sequence, 1216 residues long: Histone-lysine N-methyltransferase SETDB1-B (1216 aa).

A coiled-coil region spans residues K38 to L61. Tudor domains are found at residues R266–T329 and L356–M412. The segment at S417–K513 is disordered. Over residues P467 to P478 the composition is skewed to pro residues. Residues E482 to L498 are compositionally biased toward polar residues. The MBD domain maps to H595–L666. Positions V728–G801 constitute a Pre-SET domain. Zn(2+) contacts are provided by C730, C732, C736, C742, C744, C782, C786, C788, and C793. Positions V804 to N1179 constitute an SET domain. S-adenosyl-L-methionine-binding positions include K814–W816, D852, and Y854. 3 disordered regions span residues L892 to V944, R961 to A1057, and K1081 to K1108. Residues D918 to D940 are compositionally biased toward acidic residues. Composition is skewed to basic and acidic residues over residues G966–D976 and G983–K997. The span at W1003–V1016 shows a compositional bias: polar residues. 2 stretches are compositionally biased toward basic and acidic residues: residues G1020–V1029 and D1046–T1055. Residues S1082–N1105 show a composition bias toward gly residues. Residues R1133 and N1136–H1137 each bind S-adenosyl-L-methionine. Residues C1139, C1192, C1194, and C1199 each contribute to the Zn(2+) site. A Post-SET domain is found at K1188–L1204.

It belongs to the class V-like SAM-binding methyltransferase superfamily. Histone-lysine methyltransferase family. Suvar3-9 subfamily.

It localises to the nucleus. The protein resides in the chromosome. It catalyses the reaction L-lysyl(4)-[histone H3] + 3 S-adenosyl-L-methionine = N(6),N(6),N(6)-trimethyl-L-lysyl(4)-[histone H3] + 3 S-adenosyl-L-homocysteine + 3 H(+). Its function is as follows. Histone methyltransferase that specifically trimethylates 'Lys-9' of histone H3. H3 'Lys-9' trimethylation represents a specific tag for epigenetic transcriptional repression by recruiting HP1 (CBX1, CBX3 and/or CBX5) proteins to methylated histones. Mainly functions in euchromatin regions, thereby playing a central role in the silencing of euchromatic genes. H3 'Lys-9' trimethylation is coordinated with DNA methylation. Plays a role in promoter hypermethylation and transcriptional silencing of tumor suppressor genes (TSGs) or other tumor-related genes. Also required to maintain a transcriptionally repressive state of genes in undifferentiated embryonic stem cells (ESCs). Associates at promoter regions of tumor suppressor genes (TSGs) leading to their gene silencing. The protein is Histone-lysine N-methyltransferase SETDB1-B (setdb1b) of Danio rerio (Zebrafish).